Consider the following 175-residue polypeptide: Movement protein (175 aa).

Positions 30 to 47 are homodimerization; the sequence is ADLDDDEEVTTGQEELFL. The tract at residues 50–156 is RNA-binding; that stretch reads EQAQARHLFS…QRLTSMERNG (107 aa). Disordered stretches follow at residues 58 to 89 and 103 to 175; these read FSRK…MEYS and SSSP…VLHR. Residues 63 to 74 show a composition bias toward basic and acidic residues; that stretch reads ISREVPADESRS. Phosphoserine occurs at positions 64 and 133. 2 stretches are compositionally biased toward polar residues: residues 115–141 and 148–169; these read PSLT…SQSP and RLTS…SSTK.

The protein belongs to the polerovirus movement protein family. Homodimer. In terms of processing, phosphorylated.

Its subcellular location is the host cell junction. The protein localises to the host plasmodesma. The protein resides in the host Golgi apparatus. Together with movement protein P3a, facilitates long-distance movement of virions in host. Transports viral genome to neighboring plant cells directly through plasmosdesmata, without any budding. The movement protein allows efficient cell to cell propagation, by bypassing the host cell wall barrier. Binds ssRNA. This Beta vulgaris (Sugar beet) protein is Movement protein.